Here is a 333-residue protein sequence, read N- to C-terminus: Elongation factor Ts, mitochondrial (333 aa).

The N-terminal 17 residues, 1–17 (MLRTLRPTLPSRCLRLY), are a transit peptide targeting the mitochondrion.

It belongs to the EF-Ts family.

The protein resides in the mitochondrion. Associates with the EF-Tu.GDP complex and induces the exchange of GDP to GTP. It remains bound to the aminoacyl-tRNA.EF-Tu.GTP complex up to the GTP hydrolysis stage on the ribosome. This chain is Elongation factor Ts, mitochondrial, found in Coprinopsis cinerea (strain Okayama-7 / 130 / ATCC MYA-4618 / FGSC 9003) (Inky cap fungus).